Consider the following 336-residue polypeptide: MKFLDETKVYIRSGDGGAGAVSFRREKFIEFGGPDGGDGGRGGDVWVEAVNGLNTLIDFRYQQHFKAKTGTHGMGRNRTGAKGADVTLKVPVGTQIFEEDSETLIVDMVAEGQRYRLAAGGNGGFGNAHFKSSTNQAPNWANPGLEGEEKTIWLRLKLIADAGLVGLPNAGKSTFLAACTRARPKIANYPFTTLHPNLGVATVDEKEFIIADIPGLIEGAHEGVGIGDRFLGHVERTRVLLHLVSAQEEDVAKAYKTVKHELEAYGGGLEEKPQIVALSQIDVLDEAELKAKSKALGKACGTPPLLISAVTNKGMTETLRALRSVIDAAKAGEEDA.

One can recognise an Obg domain in the interval 1–159 (MKFLDETKVY…KTIWLRLKLI (159 aa)). In terms of domain architecture, OBG-type G spans 160 to 327 (ADAGLVGLPN…TLRALRSVID (168 aa)). GTP contacts are provided by residues 166–173 (GLPNAGKS), 191–195 (FTTLH), 212–215 (DIPG), 279–282 (SQID), and 308–310 (SAV). Positions 173 and 193 each coordinate Mg(2+).

This sequence belongs to the TRAFAC class OBG-HflX-like GTPase superfamily. OBG GTPase family. In terms of assembly, monomer. Mg(2+) is required as a cofactor.

It is found in the cytoplasm. In terms of biological role, an essential GTPase which binds GTP, GDP and possibly (p)ppGpp with moderate affinity, with high nucleotide exchange rates and a fairly low GTP hydrolysis rate. Plays a role in control of the cell cycle, stress response, ribosome biogenesis and in those bacteria that undergo differentiation, in morphogenesis control. The protein is GTPase Obg of Sinorhizobium medicae (strain WSM419) (Ensifer medicae).